The primary structure comprises 705 residues: Elongation factor G (705 aa).

One can recognise a tr-type G domain in the interval 8 to 290 (ERYRNFGIMA…GVVHLLPSPA (283 aa)). GTP contacts are provided by residues 17-24 (AHIDAGKT), 88-92 (DTPGH), and 142-145 (NKMD). The tract at residues 290-309 (ADRPPVQGIDEDEKEDTRAA) is disordered.

The protein belongs to the TRAFAC class translation factor GTPase superfamily. Classic translation factor GTPase family. EF-G/EF-2 subfamily.

The protein localises to the cytoplasm. Functionally, catalyzes the GTP-dependent ribosomal translocation step during translation elongation. During this step, the ribosome changes from the pre-translocational (PRE) to the post-translocational (POST) state as the newly formed A-site-bound peptidyl-tRNA and P-site-bound deacylated tRNA move to the P and E sites, respectively. Catalyzes the coordinated movement of the two tRNA molecules, the mRNA and conformational changes in the ribosome. The polypeptide is Elongation factor G (Xanthomonas euvesicatoria pv. vesicatoria (strain 85-10) (Xanthomonas campestris pv. vesicatoria)).